A 557-amino-acid chain; its full sequence is Hepatocyte nuclear factor 1-beta (557 aa).

A dimerization region spans residues 1 to 31; the sequence is MVSKLTSLQQELLSALLSSGVTKEVLVQALE. The region spanning 1 to 32 is the HNF-p1 domain; the sequence is MVSKLTSLQQELLSALLSSGVTKEVLVQALEE. Phosphoserine is present on residues S49, S52, S75, and S80. A disordered region spans residues 64–85; the sequence is TLTNGHAKGRLSGDEGSEDGDD. The 96-residue stretch at 93-188 folds into the POU-specific atypical domain; sequence KELQALNTEE…ILRQFNQTVQ (96 aa). The homeobox; HNF1-type DNA-binding region spans 231-311; that stretch reads MRRNRFKWGP…NRRKEEAFRQ (81 aa). The tract at residues 324–352 is disordered; sequence HSLNPLLSHGSPHHQPSSSPPNKLSGVRY. The span at 328–344 shows a compositional bias: low complexity; sequence PLLSHGSPHHQPSSSPP.

This sequence belongs to the HNF1 homeobox family. As to quaternary structure, binds DNA as a dimer. Can form homodimer or heterodimer with HNF1-alpha. Interacts (via HNF-p1 domain) with PCBD1; the interaction increases its transactivation activity.

It is found in the nucleus. Transcription factor that binds to the inverted palindrome 5'-GTTAATNATTAAC-3'. Binds to the FPC element in the cAMP regulatory unit of the PLAU gene. Transcriptional activity is increased by coactivator PCBD1. In Homo sapiens (Human), this protein is Hepatocyte nuclear factor 1-beta (HNF1B).